Reading from the N-terminus, the 740-residue chain is ATP-dependent DNA helicase Hel308 (740 aa).

Residues glutamine 28 and 46 to 53 (IPTASGKT) each bind ATP. In terms of domain architecture, Helicase ATP-binding spans 33–204 (RQGLLDGKNL…WMDAALVQSE (172 aa)). Residues 149-152 (DEVH) carry the DEAH box motif. The Helicase C-terminal domain maps to 236–436 (EVNSLVADTL…EPAMRAHALS (201 aa)). The segment at 716 to 740 (VDHTPPETEEQPQVSGQSTLFSFDG) is disordered. A compositionally biased stretch (polar residues) spans 726–740 (QPQVSGQSTLFSFDG).

Belongs to the helicase family. Hel308 subfamily. Monomer.

It carries out the reaction Couples ATP hydrolysis with the unwinding of duplex DNA by translocating in the 3'-5' direction.. The enzyme catalyses ATP + H2O = ADP + phosphate + H(+). Functionally, DNA-dependent ATPase and 3'-5' DNA helicase that may be involved in repair of stalled replication forks. The protein is ATP-dependent DNA helicase Hel308 of Methanocella arvoryzae (strain DSM 22066 / NBRC 105507 / MRE50).